Here is a 446-residue protein sequence, read N- to C-terminus: Cytochrome P450 monooxygenase ATR14 (446 aa).

The interval 403–446 (NFTYPDEFRPDRWLDDRDQKEYEHDHGDAMQPFSVGPRDCPSQK) is disordered. The span at 408-430 (DEFRPDRWLDDRDQKEYEHDHGD) shows a compositional bias: basic and acidic residues. C442 contacts heme.

It belongs to the cytochrome P450 family. Requires heme as cofactor.

Its pathway is mycotoxin biosynthesis. Its function is as follows. Cytochrome P450 monooxygenase; part of the core atranone cluster (CAC) which products are predicted to catalyze most or all steps of mycotoxin atranone synthesis, starting from geranylgeranyl pyrophosphate (GGPP). The initial cyclization of GGPP to dolabellane is probably performed by the terpene cyclase ATR13. The Baeyer-Villiger oxidation near the end of the atranone synthesis, which converts atranones D and E to atranones F and G is predicted to be catalyzed by the monooxygenase ATR8. Of the CAC's other predicted gene products, the reducing PKS ATR6 might synthesize a polyketide chain. This polyketide is probably transferred onto the atranone backbone by the polyketide transferase ATR5. Other predicted CAC products include 4 oxygenases (ATR2, ATR3, ATR4, and ATR14), 3 short-chain reductases (ATR7, ATR9, and ATR10), and a methyltransferase (ATR12). These may all be involved in the various steps of atranone biosynthesis, although their specific roles must await experimental determination. This Stachybotrys chlorohalonatus (strain IBT 40285) protein is Cytochrome P450 monooxygenase ATR14.